Here is a 255-residue protein sequence, read N- to C-terminus: Thiazole synthase (255 aa).

Residue lysine 96 is the Schiff-base intermediate with DXP of the active site. 1-deoxy-D-xylulose 5-phosphate-binding positions include glycine 157, 183–184 (AG), and 205–206 (NT).

The protein belongs to the ThiG family. As to quaternary structure, homotetramer. Forms heterodimers with either ThiH or ThiS.

The protein localises to the cytoplasm. The enzyme catalyses [ThiS sulfur-carrier protein]-C-terminal-Gly-aminoethanethioate + 2-iminoacetate + 1-deoxy-D-xylulose 5-phosphate = [ThiS sulfur-carrier protein]-C-terminal Gly-Gly + 2-[(2R,5Z)-2-carboxy-4-methylthiazol-5(2H)-ylidene]ethyl phosphate + 2 H2O + H(+). It functions in the pathway cofactor biosynthesis; thiamine diphosphate biosynthesis. Its function is as follows. Catalyzes the rearrangement of 1-deoxy-D-xylulose 5-phosphate (DXP) to produce the thiazole phosphate moiety of thiamine. Sulfur is provided by the thiocarboxylate moiety of the carrier protein ThiS. In vitro, sulfur can be provided by H(2)S. This chain is Thiazole synthase, found in Staphylococcus epidermidis (strain ATCC 12228 / FDA PCI 1200).